Reading from the N-terminus, the 355-residue chain is MPVLHNRISNEELKARMLAETEPRTTVSFYKYFTLEDAKTFRDNLYSQFVKLGVFGRVYVAKEGINAQISVPANRYDEFKIALFASHPALDQVRLNVAHEDDGKSFWVLRLKVRERIVADGIDDDSFDPANIGHYLKADQVNQMIDDPDTLFVDMRNHYEYEVGHFENAIEVPSDTFREQLPMAVDMLQHDKEKNIVMYCTGGIRCEKASAYMLHNGFKNVYHVEGGIIEYARKAKEQGLPLKFIGKNFVFDERMGERISDDVIAHCHQCGTPCDAHTNCKNDGCHLLFIQCPVCAAKFEGCCSQICQEELKLPQEEQRSRRAGRENGIKIFNKSKGLLQATMHIPSPEKSADEK.

In terms of domain architecture, Rhodanese spans 146–240 (DDPDTLFVDM…YARKAKEQGL (95 aa)). Cysteine 200 (cysteine persulfide intermediate) is an active-site residue. The segment at 333–355 (NKSKGLLQATMHIPSPEKSADEK) is disordered.

This sequence belongs to the TrhO family.

It carries out the reaction uridine(34) in tRNA + AH2 + O2 = 5-hydroxyuridine(34) in tRNA + A + H2O. Functionally, catalyzes oxygen-dependent 5-hydroxyuridine (ho5U) modification at position 34 in tRNAs. In Yersinia pseudotuberculosis serotype O:1b (strain IP 31758), this protein is tRNA uridine(34) hydroxylase.